A 317-amino-acid polypeptide reads, in one-letter code: MEKVYVAGAIPEVGLKLLQEHFEVEMYEGKGLVDKDTLIKGVKNATALISLLSTNVDKDVIDAGKDLKIIANYGAGFNNIDIEYAREKSIDVTNTPKASTNATADLTIGLVLAVARRIVEGDQLSRTTGFDGWAPLFFRGREVSGKTIGIIGLGEIGSAVARRARAFDMDVLYTGPNRKEEKEREIGAKYVDLDTLLKNADFITINAAYNPKMHHLIDTEQFKMMKSTVYLINASRGPIVHEQALVQALKDNEIEGAALDVYEFEPDITDDLKSLNNVVLTPHIGNATFEARDMMSKIVANAAISAVQGEKPQFVVN.

NAD(+) contacts are provided by residues 155–156 (EI), 234–236 (ASR), and D260. The active site involves R236. E265 is a catalytic residue. The Proton donor role is filled by H283. NAD(+) is bound at residue 283–286 (HIGN).

This sequence belongs to the D-isomer specific 2-hydroxyacid dehydrogenase family.

The polypeptide is Putative 2-hydroxyacid dehydrogenase SA2098 (Staphylococcus aureus (strain N315)).